Consider the following 93-residue polypeptide: UPF0473 protein BH1270 (93 aa).

The protein belongs to the UPF0473 family.

The sequence is that of UPF0473 protein BH1270 from Halalkalibacterium halodurans (strain ATCC BAA-125 / DSM 18197 / FERM 7344 / JCM 9153 / C-125) (Bacillus halodurans).